The chain runs to 233 residues: Probable GTP-binding protein EngB (233 aa).

The EngB-type G domain maps to 23–209; that stretch reads AVPEVAFAGR…QRIVAGWLCL (187 aa). Residues 31–38, 58–62, 82–85, 149–152, and 188–190 contribute to the GTP site; these read GRSNAGKS, GRTQH, DLPG, TKAD, and FSS. Residues S38 and T60 each contribute to the Mg(2+) site.

This sequence belongs to the TRAFAC class TrmE-Era-EngA-EngB-Septin-like GTPase superfamily. EngB GTPase family. Mg(2+) serves as cofactor.

Necessary for normal cell division and for the maintenance of normal septation. This chain is Probable GTP-binding protein EngB, found in Ralstonia pickettii (strain 12J).